We begin with the raw amino-acid sequence, 466 residues long: Asparagine--tRNA ligase (466 aa).

This sequence belongs to the class-II aminoacyl-tRNA synthetase family. As to quaternary structure, homodimer.

The protein localises to the cytoplasm. The enzyme catalyses tRNA(Asn) + L-asparagine + ATP = L-asparaginyl-tRNA(Asn) + AMP + diphosphate + H(+). This is Asparagine--tRNA ligase from Shewanella denitrificans (strain OS217 / ATCC BAA-1090 / DSM 15013).